A 96-amino-acid chain; its full sequence is Large ribosomal subunit protein bL28 (96 aa).

Polar residues predominate over residues 1–22 (MSRSCELTGKGVQSGNNVSHAN). Positions 1–24 (MSRSCELTGKGVQSGNNVSHANNK) are disordered.

Belongs to the bacterial ribosomal protein bL28 family.

This Sinorhizobium medicae (strain WSM419) (Ensifer medicae) protein is Large ribosomal subunit protein bL28.